Reading from the N-terminus, the 193-residue chain is Cysteine and glycine-rich protein 1 (193 aa).

An LIM zinc-binding 1 domain is found at 10–61 (CGVCQKTVYFAEEVQCEGNSFHKSCFLCMVCKKNLDSTTVAVHGEEIYCKSC). Residues 64–69 (KKYGPK) carry the Nuclear localization signal motif. Serine 81 carries the phosphoserine modification. Residue lysine 84 is modified to N6-acetyllysine. A Glycyl lysine isopeptide (Lys-Gly) (interchain with G-Cter in SUMO2) cross-link involves residue lysine 91. N6-acetyllysine occurs at positions 112, 131, 137, and 161. Residues 119–170 (CPRCSQAVYAAEKVIGAGKSWHKACFRCAKCGKGLESTTLADKDGEIYCKGC) form the LIM zinc-binding 2 domain. Residue serine 192 is modified to Phosphoserine.

In terms of assembly, interacts with ASCC1; ASCC2 and TRIP4.

The protein resides in the nucleus. Could play a role in neuronal development. This chain is Cysteine and glycine-rich protein 1 (CSRP1), found in Homo sapiens (Human).